A 429-amino-acid chain; its full sequence is Serine--tRNA ligase (429 aa).

229-231 (TAE) provides a ligand contact to L-serine. Residue 260–262 (RSE) coordinates ATP. Position 283 (Glu283) interacts with L-serine. An ATP-binding site is contributed by 347–350 (EISS). Ser383 lines the L-serine pocket.

It belongs to the class-II aminoacyl-tRNA synthetase family. Type-1 seryl-tRNA synthetase subfamily. As to quaternary structure, homodimer. The tRNA molecule binds across the dimer.

It localises to the cytoplasm. The catalysed reaction is tRNA(Ser) + L-serine + ATP = L-seryl-tRNA(Ser) + AMP + diphosphate + H(+). It carries out the reaction tRNA(Sec) + L-serine + ATP = L-seryl-tRNA(Sec) + AMP + diphosphate + H(+). It participates in aminoacyl-tRNA biosynthesis; selenocysteinyl-tRNA(Sec) biosynthesis; L-seryl-tRNA(Sec) from L-serine and tRNA(Sec): step 1/1. Catalyzes the attachment of serine to tRNA(Ser). Is also able to aminoacylate tRNA(Sec) with serine, to form the misacylated tRNA L-seryl-tRNA(Sec), which will be further converted into selenocysteinyl-tRNA(Sec). The polypeptide is Serine--tRNA ligase (Orientia tsutsugamushi (strain Ikeda) (Rickettsia tsutsugamushi)).